Here is a 939-residue protein sequence, read N- to C-terminus: Isoleucine--tRNA ligase (939 aa).

Residues 58–68 (PYANGNIHIGH) carry the 'HIGH' region motif. Residue glutamate 562 participates in L-isoleucyl-5'-AMP binding. Positions 603-607 (KMSKS) match the 'KMSKS' region motif. Lysine 606 is an ATP binding site. Cysteine 903, cysteine 906, cysteine 922, and cysteine 925 together coordinate Zn(2+).

It belongs to the class-I aminoacyl-tRNA synthetase family. IleS type 1 subfamily. In terms of assembly, monomer. It depends on Zn(2+) as a cofactor.

The protein resides in the cytoplasm. It catalyses the reaction tRNA(Ile) + L-isoleucine + ATP = L-isoleucyl-tRNA(Ile) + AMP + diphosphate. Functionally, catalyzes the attachment of isoleucine to tRNA(Ile). As IleRS can inadvertently accommodate and process structurally similar amino acids such as valine, to avoid such errors it has two additional distinct tRNA(Ile)-dependent editing activities. One activity is designated as 'pretransfer' editing and involves the hydrolysis of activated Val-AMP. The other activity is designated 'posttransfer' editing and involves deacylation of mischarged Val-tRNA(Ile). The polypeptide is Isoleucine--tRNA ligase (Buchnera aphidicola subsp. Baizongia pistaciae (strain Bp)).